The following is a 199-amino-acid chain: Probable thymidylate kinase (199 aa).

9 to 16 (GIDGCGKT) contacts ATP.

This sequence belongs to the thymidylate kinase family.

The catalysed reaction is dTMP + ATP = dTDP + ADP. The chain is Probable thymidylate kinase from Methanococcus maripaludis (strain C7 / ATCC BAA-1331).